The sequence spans 559 residues: Protein pp71 (559 aa).

C218 is modified (S-nitrosocysteine; by host). T223 is modified (phosphothreonine). Disordered stretches follow at residues 404-440 (EFLP…TPLS) and 530-559 (SSTL…RPRI). Acidic residues predominate over residues 415–430 (TEEEEEEEEEDDEDDL). Composition is skewed to low complexity over residues 431–440 (SSTPTPTPLS) and 543–559 (PIST…RPRI).

It belongs to the herpesviridae pp71 family. In terms of assembly, interacts with the host protein DAXX; this interaction takes place at ND10 and induces the reversal of DAXX-mediated repression of viral transcription. Interacts with UL35. Interacts with host TMEM173/STING1; this interaction inhibits the cGAS/STING pathway. Interacts with host RB1; this interaction mediates RB1 proteasomal degradation. S-nitrosylation limits ability to undermine the cGAS/STING antiviral pathway.

It is found in the virion tegument. The protein localises to the host nucleus. Its subcellular location is the host endoplasmic reticulum. Its function is as follows. Stimulates viral immediate-early (IE) transcription. Plays a role in the inhibition of the host innate repsonse by targeting STING1 and thus the cGAS-STING pathway. Also counteracts host DAXX-mediated repression of viral transcription. Displaces a DAXX-binding protein, ATRX, from nuclear domain 10 sites (ND10) shortly after infection. Increases the basal level of SUMOylated DAXX in infected cells. Stimulates quiescent cells to re-enter the cell cycle, proceed through G1 and enter the S phase. Interacts with hypophosphorylated forms of RB1 and induces their degradation by the proteasome without involving ubiquitin conjugation. This chain is Protein pp71 (UL82), found in Homo sapiens (Human).